The primary structure comprises 179 residues: Large ribosomal subunit protein uL5 (179 aa).

Belongs to the universal ribosomal protein uL5 family. In terms of assembly, part of the 50S ribosomal subunit; part of the 5S rRNA/L5/L18/L25 subcomplex. Contacts the 5S rRNA and the P site tRNA. Forms a bridge to the 30S subunit in the 70S ribosome.

This is one of the proteins that bind and probably mediate the attachment of the 5S RNA into the large ribosomal subunit, where it forms part of the central protuberance. In the 70S ribosome it contacts protein S13 of the 30S subunit (bridge B1b), connecting the 2 subunits; this bridge is implicated in subunit movement. Contacts the P site tRNA; the 5S rRNA and some of its associated proteins might help stabilize positioning of ribosome-bound tRNAs. This is Large ribosomal subunit protein uL5 from Rhodospirillum rubrum (strain ATCC 11170 / ATH 1.1.1 / DSM 467 / LMG 4362 / NCIMB 8255 / S1).